The following is a 172-amino-acid chain: Shikimate kinase (172 aa).

ATP is bound at residue 11–16; it reads GAGKST. A Mg(2+)-binding site is contributed by S15. Residues D33, R57, and G79 each coordinate substrate. Residue R117 participates in ATP binding. Residue R136 coordinates substrate. Residue R153 participates in ATP binding.

The protein belongs to the shikimate kinase family. Monomer. Requires Mg(2+) as cofactor.

Its subcellular location is the cytoplasm. The enzyme catalyses shikimate + ATP = 3-phosphoshikimate + ADP + H(+). It participates in metabolic intermediate biosynthesis; chorismate biosynthesis; chorismate from D-erythrose 4-phosphate and phosphoenolpyruvate: step 5/7. Functionally, catalyzes the specific phosphorylation of the 3-hydroxyl group of shikimic acid using ATP as a cosubstrate. The chain is Shikimate kinase from Pseudomonas entomophila (strain L48).